The chain runs to 348 residues: Rhodopsin (348 aa).

An N-acetylmethionine modification is found at Met-1. The Extracellular portion of the chain corresponds to Met-1 to Gln-36. 2 N-linked (GlcNAc...) asparagine glycosylation sites follow: Asn-2 and Asn-15. The chain crosses the membrane as a helical span at residues Phe-37–Val-61. Over Thr-62–Asn-73 the chain is Cytoplasmic. The chain crosses the membrane as a helical span at residues Tyr-74 to Leu-99. Over His-100–Asn-111 the chain is Extracellular. Cys-110 and Cys-187 are joined by a disulfide. Residues Leu-112–Ile-133 traverse the membrane as a helical segment. The 'Ionic lock' involved in activated form stabilization signature appears at Glu-134–Tyr-136. Topologically, residues Glu-134 to His-152 are cytoplasmic. A helical membrane pass occupies residues Ala-153–Val-173. Over Gly-174–Ser-202 the chain is Extracellular. Glu-201 contributes to the Zn(2+) binding site. The chain crosses the membrane as a helical span at residues Phe-203 to Val-227. Topologically, residues Phe-228–Arg-252 are cytoplasmic. Residues Met-253 to Tyr-274 traverse the membrane as a helical segment. The Extracellular segment spans residues Ile-275–Ile-286. Gln-279 serves as a coordination point for Zn(2+). Residues Phe-287–Tyr-306 traverse the membrane as a helical segment. The residue at position 296 (Lys-296) is an N6-(retinylidene)lysine. The Cytoplasmic segment spans residues Ile-307–Ala-348. Residues Cys-322 and Cys-323 are each lipidated (S-palmitoyl cysteine). At Ser-334 the chain carries Phosphoserine. Phosphothreonine is present on residues Thr-335 and Thr-336. Ser-338 carries the post-translational modification Phosphoserine. 2 positions are modified to phosphothreonine: Thr-340 and Thr-342. Phosphoserine is present on Ser-343.

This sequence belongs to the G-protein coupled receptor 1 family. Opsin subfamily. Homodimer. May form a complex composed of RHO, GRK1 and RCVRN in a Ca(2+)-dependent manner; RCVRN prevents the interaction between GRK1 and RHO. Interacts with GRK1. Interacts (phosphorylated form) with SAG. Interacts with GNAT1. Interacts with GNAT3. SAG and G-proteins compete for a common binding site. Interacts with PRCD; the interaction promotes PRCD stability. Forms a complex with ASAP1 and ARF4. Forms a complex with ASAP1, RAB11A, Rabin8/RAB3IP, ARF4 and RAB11FIP3; the complex regulates Golgi-to-cilia rhodopsin/RHO transport in photoreceptors. In terms of processing, contains one covalently linked retinal chromophore. Upon light absorption, the covalently bound 11-cis-retinal is converted to all-trans-retinal. After hydrolysis of the Schiff base and release of the covalently bound all-trans-retinal, active rhodopsin is regenerated by binding of a fresh molecule of 11-cis-retinal.

Its subcellular location is the membrane. It localises to the cell projection. The protein localises to the cilium. The protein resides in the photoreceptor outer segment. Functionally, photoreceptor required for image-forming vision at low light intensity. Light-induced isomerization of 11-cis to all-trans retinal triggers a conformational change that activates signaling via G-proteins. Signaling mediates the activation of phospholipase C. Subsequent receptor phosphorylation mediates displacement of the bound G-protein alpha subunit by arrestin and terminates signaling. The sequence is that of Rhodopsin (RHO) from Tursiops truncatus (Atlantic bottle-nosed dolphin).